The following is a 277-amino-acid chain: MSSKSQLTYTARASKHPNALAKRLFEIAEAKKTNVTVSADVTTTKELLDLADRLGPYIAVIKTHIDILSDFSDETIEGLKALAQKHIFLIFEDRKFIDIGNTVQKQYHRGTLRISEWAHIINCSILPGEGIVEALAQTASAPDFGYGPERGLLILAEMTSKGSLATGQYTTSSVDYARKSKNFVMGFVSTRPLGEVQSEVSSPSDEEDFVVFTTGVNISSKGDKLGQQYQTPASAIGRGADFIIAGRGIYAAPDPVQAAQQYQKEGWEAYLARVGGN.

Substrate-binding positions include aspartate 40, 62–64, 93–102, tyrosine 229, and arginine 247; these read KTH and DRKFIDIGNT. The Proton donor role is filled by lysine 95.

Belongs to the OMP decarboxylase family.

The catalysed reaction is orotidine 5'-phosphate + H(+) = UMP + CO2. It functions in the pathway pyrimidine metabolism; UMP biosynthesis via de novo pathway; UMP from orotate: step 2/2. The polypeptide is Orotidine 5'-phosphate decarboxylase (pyrG) (Aspergillus kawachii (White koji mold)).